The chain runs to 511 residues: MRIIPRTMSTQHPDNAKVPEWAKSEVIEGEDEVKEAFLAYSMYGVHEVMWDAEGKDVDTHVVRKLLSNYPDYFREHILGKDVFLTYRLPNPKVEGADRKVFAETMESIPITYDLAEKFYGNGITVPVFEVILPMTTSNLEIISVARYYEKAVANEDELELYDGVKVKDLVGEIYPKVIEVIPLVEERDSLQNIDNIVEGYYKVIKPKYMRVFLARSDPAMNYGMITAVLSVKIALSELYKLSESLNFEIYPIIGVGSLPFRGHLSPENYEKVLEEYKGVYTYTIQSAFKYDYDYDKVKSAISSINNSRIGPAKILEKYEEDVLRKITILYTERYQPIIESLANAINDVSVLLPRRRARKLHIGLFGYSRSAGKVSLPRAISFVGSLYSIGIPPELIGISSLSNLDEKEWDIFKQNYVNFKHDLQTAARFFNWESFELIKDIWKISEDTIAKIKEDIDYAESVIGIKLGGIDYDSRKHILMSSLFLLSFKEKILQESKKYLYEMALIRRSLG.

Belongs to the PEPCase type 2 family. In terms of assembly, homotetramer. Mg(2+) is required as a cofactor.

The enzyme catalyses oxaloacetate + phosphate = phosphoenolpyruvate + hydrogencarbonate. Catalyzes the irreversible beta-carboxylation of phosphoenolpyruvate (PEP) to form oxaloacetate (OAA), a four-carbon dicarboxylic acid source for the tricarboxylic acid cycle. The protein is Phosphoenolpyruvate carboxylase of Saccharolobus islandicus (strain L.S.2.15 / Lassen #1) (Sulfolobus islandicus).